Here is a 144-residue protein sequence, read N- to C-terminus: Maximins 9/H3 (144 aa).

The N-terminal stretch at 1–18 is a signal peptide; the sequence is MNFKYIVAVSFLIASAYA. A propeptide spanning residues 19 to 43 is cleaved from the precursor; sequence RSVKNDEQSLSQRDVLEEESLREIR. Y70 bears the Tyrosine amide mark. Residues 74–123 constitute a propeptide that is removed on maturation; it reads TAEEHEVMKRLEAIMRDLDSLDHPEEASERETRGFNQDEIANLFTKKEKR. Position 143 is an isoleucine amide (I143).

It belongs to the bombinin family. In terms of tissue distribution, expressed by the skin glands.

It localises to the secreted. Functionally, maximin-9 shows antimicrobial activity against bacteria and against the fungus C.albicans. It has little hemolytic activity. In terms of biological role, maximin-H3 shows antibacterial activity against both Gram-positive and Gram-negative bacteria. It also shows antimicrobial activity against the fungus C.albicans. Shows strong hemolytic activity. This chain is Maximins 9/H3, found in Bombina maxima (Giant fire-bellied toad).